A 516-amino-acid chain; its full sequence is Cyclic AMP response element-binding protein A (516 aa).

Phosphoserine is present on residues serine 75, serine 79, and serine 82. 3 disordered regions span residues 213 to 237 (KDEP…SQHQ), 294 to 338 (KSEK…HLFA), and 353 to 408 (PAGG…KGST). Residues 221–237 (SSCPASPTSQASSSQHQ) show a composition bias toward low complexity. Residues 361 to 392 (RVSRTAASITRSSSGSASASGSSTSSTVTTTR) are compositionally biased toward low complexity. Positions 441-504 (SLKKIRRKIK…ANLLSQLHKL (64 aa)) constitute a bZIP domain. Residues 443 to 463 (KKIRRKIKNKISAQESRRKKK) are basic motif. The segment at 469–476 (LERRVEIL) is leucine-zipper.

It belongs to the bZIP family. May bind DNA as heterodimers with other bZIP proteins. As to expression, in all cell types examined, including developing salivary gland in embryos and in adults, brain and optic lobe cell bodies, salivary gland, midgut epithelial cells of the cardia, female ovarian columnar follicle cells and male seminal vesicle, ejaculatory duct, and ejaculatory bulb.

The protein localises to the nucleus. Transcriptional activator. Binds to fat body-specific enhancers of alcohol dehydrogenase (ADH) and yolk protein genes. BBF-2 may play a role in fat body gene expression. It binds the consensus sequence 5'-T[AC]NACGTAN[TG]C-3'. This chain is Cyclic AMP response element-binding protein A (CrebA), found in Drosophila melanogaster (Fruit fly).